Reading from the N-terminus, the 116-residue chain is Large ribosomal subunit protein bL19 (116 aa).

Belongs to the bacterial ribosomal protein bL19 family.

This protein is located at the 30S-50S ribosomal subunit interface and may play a role in the structure and function of the aminoacyl-tRNA binding site. The protein is Large ribosomal subunit protein bL19 of Clostridium novyi (strain NT).